Reading from the N-terminus, the 311-residue chain is Homeobox-leucine zipper protein ATHB-6 (311 aa).

A compositionally biased stretch (polar residues) spans 1 to 10; the sequence is MMKRLSSSDS. Residues 1–32 form a disordered region; sequence MMKRLSSSDSVGGLISLCPTTSTDEQSPRRYG. The tract at residues 1-43 is interaction with ABI1; that stretch reads MMKRLSSSDSVGGLISLCPTTSTDEQSPRRYGGREFQSMLEGY. A DNA-binding region (homeobox) is located at residues 59–118; the sequence is LSEKKRRLSINQVKALEKNFELENKLEPERKVKLAQELGLQPRQVAVWFQNRRARWKTKQ. A leucine-zipper region spans residues 119–154; it reads LEKDYGVLKTQYDSLRHNFDSLRRDNESLLQEISKL. Residues 157 to 183 are disordered; the sequence is KLNGGGGEEEEEENNAAVTTESDISVK. The tract at residues 218-311 is interaction with ABI1; sequence LRDLLPLKAA…HWYSTVDHWN (94 aa).

This sequence belongs to the HD-ZIP homeobox family. Class I subfamily. Interacts with ABI1. Post-translationally, phosphorylated by PKA. Reversible inactivation of the binding to DNA by phosphorylation. As to expression, widely expressed.

The protein resides in the nucleus. Its function is as follows. Transcription activator that may act as growth regulators in response to water deficit. Interacts with the core sequence 5'-CAATTATTA-3' of promoters in response to ABA and in an ABI1-dependent manner. Involved in the negative regulation of the ABA signaling pathway. This Arabidopsis thaliana (Mouse-ear cress) protein is Homeobox-leucine zipper protein ATHB-6 (ATHB-6).